Here is a 206-residue protein sequence, read N- to C-terminus: Cytochrome b6-f complex iron-sulfur subunit, chloroplastic (206 aa).

The transit peptide at 1–29 directs the protein to the chloroplast; sequence MAMITSRRAAAPCKAQATRRSRVMSVVRA. A helical transmembrane segment spans residues 48 to 68; that stretch reads ILLGGASLPVGSLALGYGAFF. The region spanning 92-188 is the Rieske domain; sequence ANAWLATHQK…CDVQEDGLVT (97 aa). Positions 134, 136, 152, and 155 each coordinate [2Fe-2S] cluster. Cysteine 139 and cysteine 154 are oxidised to a cystine.

The protein belongs to the Rieske iron-sulfur protein family. As to quaternary structure, the 4 large subunits of the cytochrome b6-f complex are cytochrome b6, subunit IV (17 kDa polypeptide, petD), cytochrome f and the Rieske protein, while the 4 small subunits are petG, petL, petM and petN. The complex functions as a dimer. [2Fe-2S] cluster is required as a cofactor.

It localises to the plastid. The protein localises to the chloroplast thylakoid membrane. It carries out the reaction 2 oxidized [plastocyanin] + a plastoquinol + 2 H(+)(in) = 2 reduced [plastocyanin] + a plastoquinone + 4 H(+)(out). Its function is as follows. Component of the cytochrome b6-f complex, which mediates electron transfer between photosystem II (PSII) and photosystem I (PSI), cyclic electron flow around PSI, and state transitions. The sequence is that of Cytochrome b6-f complex iron-sulfur subunit, chloroplastic (petC) from Volvox carteri (Green alga).